The following is a 347-amino-acid chain: Guanine nucleotide-binding protein alpha-5 subunit (347 aa).

Residue glycine 2 is the site of N-myristoyl glycine attachment. A lipid anchor (S-palmitoyl cysteine) is attached at cysteine 3. The G-alpha domain maps to asparagine 27–tyrosine 347. The G1 motif stretch occupies residues lysine 30–threonine 43. GTP-binding positions include glycine 35–serine 42, leucine 170–threonine 176, aspartate 195–glutamine 199, asparagine 264–aspartate 267, and alanine 319. Positions 42 and 176 each coordinate Mg(2+). The tract at residues aspartate 168 to threonine 176 is G2 motif. Residues phenylalanine 191–arginine 200 form a G3 motif region. The interval isoleucine 260–aspartate 267 is G4 motif. Positions threonine 317 to threonine 322 are G5 motif.

Belongs to the G-alpha family. G(q) subfamily. G proteins are composed of 3 units; alpha, beta and gamma. The alpha chain contains the guanine nucleotide binding site.

Guanine nucleotide-binding proteins (G proteins) are involved as modulators or transducers in various transmembrane signaling systems. The polypeptide is Guanine nucleotide-binding protein alpha-5 subunit (gpaE) (Dictyostelium discoideum (Social amoeba)).